The sequence spans 891 residues: Major core protein 4a precursor (891 aa).

It belongs to the poxviridae protein P4a family. In terms of assembly, interacts with P39/A4.

It localises to the virion. In terms of biological role, core protein 4a is the most abundant virion protein. Major component of the virion core that undergoes proteolytic processing during the immature virion (IV) to mature virion (MV) transition. The chain is Major core protein 4a precursor from Fowlpox virus (strain NVSL) (FPV).